Reading from the N-terminus, the 1276-residue chain is Histone-lysine N-methyltransferase PRDM16 (1276 aa).

Residues 1–10 (MRSKARARKL) are compositionally biased toward basic residues. The interval 1–68 (MRSKARARKL…DFTPKEGSPY (68 aa)) is disordered. Residues 82–211 (ADFELRESSI…PGEELLVHVK (130 aa)) form the SET domain. The C2H2-type 1; atypical zinc-finger motif lies at 230–253 (FRCDECDELFQSKLDLRRHKKYTC). C2H2-type zinc fingers lie at residues 281 to 303 (HECKDCERMFPNKYSLEQHMVIH), 309 to 331 (YKCDQCPKAFNWKSNLIRHQMSH), 337 to 360 (FECENCVKVFTDPSNLQRHIRSQH), 366 to 388 (HACPDCGKTFATSSGLKQHKHIH), and 394 to 416 (FICEVCHKSYTQFSNLCRHKRMH). Residues 423–445 (IKCKDCGQMFSTTSSLNKHRRFC) form a C2H2-type 7; atypical zinc finger. Disordered regions lie at residues 533–657 (SLLK…APPG) and 772–804 (PFDLTTKPKDVKPILPMPKGPSAPASGEEQPLD). The segment covering 561–570 (AVSNSSQGTT) has biased composition (polar residues). A compositionally biased stretch (basic and acidic residues) spans 575-597 (PEEKFESRLEDSCVEKLKTRSSD). Residues 609–624 (TTTGTDLDTTTGTGSD) are compositionally biased toward low complexity. The segment covering 632–642 (DPDKDKGKGKS) has biased composition (basic and acidic residues). The interaction with CTBP1, CTBP2 and ZNF516 stretch occupies residues 679-1038 (DEQLLTATGA…KHEHENAPVS (360 aa)). The mediates interaction with SKI and regulation of TGF-beta signaling stretch occupies residues 739 to 1276 (PFTDRALAHN…SGAFHPINHL (538 aa)). 3 C2H2-type zinc fingers span residues 951–973 (YTCRYCGKIFPRSANLTRHLRTH), 979–1002 (YRCKYCDRSFSISSNLQRHVRNIH), and 1008–1032 (FKCHLCNRCFGQQTNLDRHLKKHEH). Disordered stretches follow at residues 1033–1065 (ENAPVSQHPGVLTNHLGTSASSPTSESDNHALL) and 1105–1163 (AQCP…EPAA). Polar residues predominate over residues 1047–1058 (HLGTSASSPTSE). Positions 1116–1133 (EDVEEEDDDDLEEDDEDS) are enriched in acidic residues.

Belongs to the PRDM16 family. As to quaternary structure, interacts with CEBPA, CEBPB and CEBPD; the interaction is direct. Interacts with PPARG and PPARA; controls brown adipocytes differentiation. Interacts with CTBP1 and CTBP2; represses the expression of WAT-specific genes. Interacts with PPARGC1A and PPARGC1B; interaction with PPARGC1A or PPARGC1B activates the transcription of BAT-specific gene. Interacts with HDAC1, SKI, SMAD2 and SMAD3; the interaction with SKI promotes the recruitment of SMAD3-HDAC1 complex on the promoter of TGF-beta target genes. Interacts with ZNF516; the interaction is direct and may play a role in the transcription of brown adipose tissue-specific gene. In terms of tissue distribution, expressed in uterus and kidney. Expressed in both cardiomyocytes and interstitial cells.

It localises to the nucleus. Its subcellular location is the cytoplasm. It catalyses the reaction L-lysyl(9)-[histone H3] + S-adenosyl-L-methionine = N(6)-methyl-L-lysyl(9)-[histone H3] + S-adenosyl-L-homocysteine + H(+). Its function is as follows. Binds DNA and functions as a transcriptional regulator. Displays histone methyltransferase activity and monomethylates 'Lys-9' of histone H3 (H3K9me1) in vitro. Probably catalyzes the monomethylation of free histone H3 in the cytoplasm which is then transported to the nucleus and incorporated into nucleosomes where SUV39H methyltransferases use it as a substrate to catalyze histone H3 'Lys-9' trimethylation. Likely to be one of the primary histone methyltransferases along with MECOM/PRDM3 that direct cytoplasmic H3K9me1 methylation. Functions in the differentiation of brown adipose tissue (BAT) which is specialized in dissipating chemical energy in the form of heat in response to cold or excess feeding while white adipose tissue (WAT) is specialized in the storage of excess energy and the control of systemic metabolism. Together with CEBPB, regulates the differentiation of myoblastic precursors into brown adipose cells. Functions as a repressor of TGF-beta signaling. Functionally, binds DNA and functions as a transcriptional regulator. Functions as a repressor of TGF-beta signaling. May regulate granulocyte differentiation. The chain is Histone-lysine N-methyltransferase PRDM16 from Homo sapiens (Human).